The chain runs to 408 residues: LL-diaminopimelate aminotransferase (408 aa).

Substrate contacts are provided by Tyr15 and Gly42. Pyridoxal 5'-phosphate-binding positions include Tyr72, 108-109 (SK), Tyr132, Asn187, Tyr218, and 246-248 (SFS). Residues Lys109, Tyr132, and Asn187 each contribute to the substrate site. Residue Lys249 is modified to N6-(pyridoxal phosphate)lysine. Pyridoxal 5'-phosphate-binding residues include Arg257 and Asn292. The substrate site is built by Asn292 and Arg388.

The protein belongs to the class-I pyridoxal-phosphate-dependent aminotransferase family. LL-diaminopimelate aminotransferase subfamily. Homodimer. Requires pyridoxal 5'-phosphate as cofactor.

The catalysed reaction is (2S,6S)-2,6-diaminopimelate + 2-oxoglutarate = (S)-2,3,4,5-tetrahydrodipicolinate + L-glutamate + H2O + H(+). It participates in amino-acid biosynthesis; L-lysine biosynthesis via DAP pathway; LL-2,6-diaminopimelate from (S)-tetrahydrodipicolinate (aminotransferase route): step 1/1. Involved in the synthesis of meso-diaminopimelate (m-DAP or DL-DAP), required for both lysine and peptidoglycan biosynthesis. Catalyzes the direct conversion of tetrahydrodipicolinate to LL-diaminopimelate. The chain is LL-diaminopimelate aminotransferase from Prochlorococcus marinus (strain MIT 9313).